Here is a 293-residue protein sequence, read N- to C-terminus: Malonyl CoA-acyl carrier protein transacylase (293 aa).

Active-site residues include serine 88 and histidine 188.

Belongs to the FabD family.

The catalysed reaction is holo-[ACP] + malonyl-CoA = malonyl-[ACP] + CoA. The protein operates within lipid metabolism; fatty acid biosynthesis. This Synechocystis sp. (strain ATCC 27184 / PCC 6803 / Kazusa) protein is Malonyl CoA-acyl carrier protein transacylase (fabD).